Here is a 776-residue protein sequence, read N- to C-terminus: Cullin-1 (776 aa).

Arginine 63 is modified (omega-N-methylarginine). One can recognise a Cullin neddylation domain in the interval 706 to 766 (DRKLLIQAAI…IEKEYLERVD (61 aa)). Residue lysine 720 forms a Glycyl lysine isopeptide (Lys-Gly) (interchain with G-Cter in NEDD8) linkage.

It belongs to the cullin family. In terms of assembly, component of multiple Cul1-RING E3 ubiquitin-protein ligase complexes commonly known as SCF (SKP1-CUL1-F-box) complexes, consisting of CUL1, SKP1, RBX1 and a variable F-box domain-containing protein as substrate-specific subunit. Component of the SCF(FBXW11) complex containing FBXW11. Component of the SCF(SKP2) complex containing SKP2, in which it interacts directly with SKP1, SKP2 and RBX1. Component of the SCF(FBXW2) complex containing FBXW2. Component of the SCF(FBXO32) complex containing FBXO32. Component of the probable SCF(FBXO7) complex containing FBXO7. Component of the SCF(FBXO10) complex containing FBXO10. Component of the SCF(FBXO11) complex containing FBXO11. Component of the SCF(FBXO25) complex containing FBXO25. Component of the SCF(FBXO33) complex containing FBXO33. Component of the probable SCF(FBXO4) complex containing FBXO4. Component of the SCF(FBXO44) complex, composed of SKP1, CUL1 and FBXO44. Component of the SCF(BTRC) complex, composed of SKP1, CUL1 and BTRC. This complex binds phosphorylated NFKBIA. Part of a SCF complex consisting of CUL1, RBX1, SKP1 and FBXO2. Component of a SCF(SKP2)-like complex containing CUL1, SKP1, TRIM21 and SKP2. Component of the SCF(FBXO17) complex, composed of SKP1, CUL1 and FBXO17. Component of the SCF(FBXO27) complex, composed of SKP1, CUL1 and FBXO27. Component of the SCF(CCNF) complex consisting of CUL1, RBX1, SKP1 and CCNF. Interacts with CCNF. Component of the SCF(FBXL3) complex composed of CUL1, SKP1, RBX1 and FBXL3. Component of the SCF(FBXL21) complex composed of CUL1, SKP1, RBX1 and FBXL21. Component of the SCF(FBXO9) composed of CUL1, SKP1, RBX1 and FBXO9. Component of the SCF(FBXW7) composed of CUL1, SKP1, RBX1 and FBXW7. Component of the SCF(FBXO31) complex composed of CUL1, SKP1, RBX1 and FBXO31. Interacts with CHEK2; mediates CHEK2 ubiquitination and regulates its function. Part of a complex with TIP120A/CAND1 and RBX1. The unneddylated form interacts with TIP120A/CAND1 and the interaction mediates the exchange of the F-box substrate-specific subunit. Can self-associate. Interacts with FBXW8. Interacts with RNF7. Interacts with TRIM21. Interacts with COPS2. Interacts with DCUN1D1 and UBE2M. Interacts with DCUN1D3. Interacts with DCUN1D4. Identified in a complex with RBX1 and GLMN. Interacts with CEP68 as part of the SCF(FBXW11) complex; the interaction is probably mediated by FBXW11 and the complex also contains CDK5RAP2 and PCNT. Interacts (when neddylated) with ARIH1; leading to activate the E3 ligase activity of ARIH1. Interacts with COPS9. Interacts with UBXN1. Interacts with KAT7, probably as part of an SCF complex; the interaction mediates KAT7 ubiquitination. Interacts with NOTCH2. Part of a complex that contains DCUN1D5, CUL1 and RBX1; this interaction is bridged by CUL1. Interacts (unneddylated form) with DCUN1D1, DCUN1D2, DCUN1D3, DCUN1D4 and DCUN1D5; these interactions promote the cullin neddylation. Interacts (via the C-terminal domain) with CUL7; the interaction seems to be mediated by FBXW8; it is likely specific to FBXW8, but not other F-box proteins. Interacts with UBR2, as part of SCF(BTRC) complex; the interaction mediates 'Lys-48'-linked ubiquitination of UBR2 and is regulated by DUSP22 in the T-cell receptor signaling pathway. As to quaternary structure, (Microbial infection) Interacts with murine cytomegalovirus M48. Neddylated; which enhances the ubiquitination activity of SCF. Neddylation prevents binding of the inhibitor CAND1. Neddylation leads to structural rearrangment in the complex that allows interaction between the E2 ubiquitin-conjugating enzyme and the acceptor ubiquitin. Deneddylated via its interaction with the COP9 signalosome (CSN) complex. In terms of processing, (Microbial infection) Deneddylated by murine cytomegalovirus M48 leading to a S-phase-like environment that is required for efficient replication of the viral genome. In terms of tissue distribution, embryo fibroblasts and embryo preadipocytes.

It functions in the pathway protein modification; protein ubiquitination. Functionally, core component of multiple cullin-RING-based SCF (SKP1-CUL1-F-box protein) E3 ubiquitin-protein ligase complexes, which mediate the ubiquitination of proteins involved in cell cycle progression, signal transduction and transcription. SCF complexes and ARIH1 collaborate in tandem to mediate ubiquitination of target proteins. In the SCF complex, serves as a rigid scaffold that organizes the SKP1-F-box protein and RBX1 subunits. May contribute to catalysis through positioning of the substrate and the ubiquitin-conjugating enzyme. The E3 ubiquitin-protein ligase activity of the complex is dependent on the neddylation of the cullin subunit and exchange of the substrate recognition component is mediated by TIP120A/CAND1. The functional specificity of the SCF complex depends on the F-box protein as substrate recognition component. SCF(BTRC) and SCF(FBXW11) direct ubiquitination of CTNNB1 and participate in Wnt signaling. SCF(FBXW11) directs ubiquitination of phosphorylated NFKBIA. SCF(BTRC) directs ubiquitination of NFKBIB, NFKBIE, ATF4, SMAD3, SMAD4, CDC25A, FBXO5 and probably NFKB2. SCF(BTRC) and/or SCF(FBXW11) direct ubiquitination of CEP68. SCF(SKP2) directs ubiquitination of phosphorylated CDKN1B/p27kip and is involved in regulation of G1/S transition. SCF(SKP2) directs ubiquitination of ORC1, CDT1, RBL2, ELF4, CDKN1A, RAG2, FOXO1A, and probably MYC and TAL1. SCF(FBXW7) directs ubiquitination of cyclin E, NOTCH1 released notch intracellular domain (NICD), and probably PSEN1. SCF(FBXW2) directs ubiquitination of GCM1. SCF(FBXO32) directs ubiquitination of MYOD1. SCF(FBXO7) directs ubiquitination of BIRC2 and DLGAP5. SCF(FBXO33) directs ubiquitination of YBX1. SCF(FBXO1) directs ubiquitination of BCL6 and DTL but does not seem to direct ubiquitination of TP53. SCF(BTRC) mediates the ubiquitination of NFKBIA at 'Lys-21' and 'Lys-22'; the degradation frees the associated NFKB1-RELA dimer to translocate into the nucleus and to activate transcription. SCF(CCNF) directs ubiquitination of CCP110. SCF(FBXL3) and SCF(FBXL21) direct ubiquitination of CRY1 and CRY2. SCF(FBXO9) directs ubiquitination of TTI1 and TELO2. SCF(FBXO10) directs ubiquitination of BCL2. Neddylated CUL1-RBX1 ubiquitinates p53/TP53 recruited by Cul7-RING(FBXW8) complex. SCF(BTRC) directs 'Lys-48'-linked ubiquitination of UBR2 in the T-cell receptor signaling pathway. The SCF(FBXO31) protein ligase complex specifically mediates the ubiquitination of proteins amidated at their C-terminus in response to oxidative stress. This is Cullin-1 (Cul1) from Mus musculus (Mouse).